We begin with the raw amino-acid sequence, 211 residues long: N-(5'-phosphoribosyl)anthranilate isomerase (211 aa).

It belongs to the TrpF family.

It carries out the reaction N-(5-phospho-beta-D-ribosyl)anthranilate = 1-(2-carboxyphenylamino)-1-deoxy-D-ribulose 5-phosphate. It participates in amino-acid biosynthesis; L-tryptophan biosynthesis; L-tryptophan from chorismate: step 3/5. The sequence is that of N-(5'-phosphoribosyl)anthranilate isomerase from Pseudomonas paraeruginosa (strain DSM 24068 / PA7) (Pseudomonas aeruginosa (strain PA7)).